The sequence spans 778 residues: uncharacterized protein (778 aa).

3 stretches are compositionally biased toward polar residues: residues 1 to 11 (MPISSPGTRCS), 18 to 34 (TLQQ…QSLG), and 41 to 51 (GSITENYVQDS). A disordered region spans residues 1–60 (MPISSPGTRCSSDLKDPTLQQYSAESVSTEQSLGTFEESKGSITENYVQDSSVDEHDDGN). Transmembrane regions (helical) follow at residues 356–381 (YILM…APII) and 401–423 (GFLA…GAHI).

Belongs to the TMCO4 family.

The protein localises to the golgi apparatus membrane. This is an uncharacterized protein from Schizosaccharomyces pombe (strain 972 / ATCC 24843) (Fission yeast).